A 287-amino-acid polypeptide reads, in one-letter code: Phosphatidylserine decarboxylase proenzyme (287 aa).

Residues Asp-89, His-146, and Ser-252 each act as charge relay system; for autoendoproteolytic cleavage activity in the active site. Catalysis depends on Ser-252, which acts as the Schiff-base intermediate with substrate; via pyruvic acid; for decarboxylase activity. A Pyruvic acid (Ser); by autocatalysis modification is found at Ser-252.

It belongs to the phosphatidylserine decarboxylase family. PSD-B subfamily. Prokaryotic type I sub-subfamily. Heterodimer of a large membrane-associated beta subunit and a small pyruvoyl-containing alpha subunit. It depends on pyruvate as a cofactor. In terms of processing, is synthesized initially as an inactive proenzyme. Formation of the active enzyme involves a self-maturation process in which the active site pyruvoyl group is generated from an internal serine residue via an autocatalytic post-translational modification. Two non-identical subunits are generated from the proenzyme in this reaction, and the pyruvate is formed at the N-terminus of the alpha chain, which is derived from the carboxyl end of the proenzyme. The autoendoproteolytic cleavage occurs by a canonical serine protease mechanism, in which the side chain hydroxyl group of the serine supplies its oxygen atom to form the C-terminus of the beta chain, while the remainder of the serine residue undergoes an oxidative deamination to produce ammonia and the pyruvoyl prosthetic group on the alpha chain. During this reaction, the Ser that is part of the protease active site of the proenzyme becomes the pyruvoyl prosthetic group, which constitutes an essential element of the active site of the mature decarboxylase.

It is found in the cell membrane. It catalyses the reaction a 1,2-diacyl-sn-glycero-3-phospho-L-serine + H(+) = a 1,2-diacyl-sn-glycero-3-phosphoethanolamine + CO2. It participates in phospholipid metabolism; phosphatidylethanolamine biosynthesis; phosphatidylethanolamine from CDP-diacylglycerol: step 2/2. Catalyzes the formation of phosphatidylethanolamine (PtdEtn) from phosphatidylserine (PtdSer). This chain is Phosphatidylserine decarboxylase proenzyme, found in Shewanella pealeana (strain ATCC 700345 / ANG-SQ1).